We begin with the raw amino-acid sequence, 378 residues long: MNLHEYQAKEILARYGVPVPPGKVAYTPEEAKRIAEEFGKRVVIKAQVHVGGRGKAGGVKLADTPQEAYEKAQAILGMNIKGLTVKKVLVAEAVDIAKEYYAGLILDRAKKRVVLMLSKEGGVDIEEVAAERPEAIHKFWIDPHKGFRPFEAREMVKRAGLEGNLNKLAQVLVALYRAYEGVDASIAEINPLVVTTDGGIVAADAKIVLDDNALFRHPDLAELREVEAEHPLEVEASNYGFAYVKLDGNIGIIGNGAGLVMYTLDLVNRVGGKPANFLDIGGGAKADVVYNALKVVLKDPDVKGVFINIFGGITRADEVAKGVIRALEEGLLTKPVVMRVAGTAEEEAKKLLEGKPVYMYPTSIEAAKAIVAMVGGAA.

The ATP-grasp domain maps to 9–235 (KEILARYGVP…VEAEHPLEVE (227 aa)). GTP contacts are provided by residues Lys-45, 52 to 54 (GRG), Val-94, and Glu-99. The Mg(2+) site is built by Asn-190 and Asp-204. Residues Asn-255 and 312–314 (GIT) each bind substrate.

The protein belongs to the succinate/malate CoA ligase beta subunit family. Heterotetramer of two alpha and two beta subunits. Requires Mg(2+) as cofactor.

It carries out the reaction GTP + succinate + CoA = succinyl-CoA + GDP + phosphate. It catalyses the reaction succinate + ATP + CoA = succinyl-CoA + ADP + phosphate. Its pathway is carbohydrate metabolism; tricarboxylic acid cycle; succinate from succinyl-CoA (ligase route): step 1/1. Functionally, succinyl-CoA synthetase functions in the citric acid cycle (TCA), coupling the hydrolysis of succinyl-CoA to the synthesis of either ATP or GTP and thus represents the only step of substrate-level phosphorylation in the TCA. The beta subunit provides nucleotide specificity of the enzyme and binds the substrate succinate, while the binding sites for coenzyme A and phosphate are found in the alpha subunit. Can use either ATP or GTP, but prefers GTP. This is Succinate--CoA ligase [GDP-forming] subunit beta from Thermus thermophilus.